The chain runs to 276 residues: Homeobox protein TOS8 (276 aa).

Residues 176–185 are compositionally biased toward polar residues; the sequence is NSVRGSNNGY. Residues 176-199 form a disordered region; that stretch reads NSVRGSNNGYSAKEKKHKAHGKRS. A compositionally biased stretch (basic residues) spans 189-199; that stretch reads EKKHKAHGKRS. The homeobox; TALE-type DNA-binding region spans 194-256; that stretch reads AHGKRSNLPK…NARRRKIFSG (63 aa).

Belongs to the TALE/CUP9 homeobox family.

The protein localises to the nucleus. In Saccharomyces cerevisiae (strain ATCC 204508 / S288c) (Baker's yeast), this protein is Homeobox protein TOS8 (TOS8).